A 958-amino-acid chain; its full sequence is Dermatan-sulfate epimerase (958 aa).

An N-terminal signal peptide occupies residues 1–22; sequence MRTHTRGAPSVFFICLFCFVSA. Over 23-902 the chain is Lumenal; it reads CVTDENPEVM…APALSASYTR (880 aa). Asparagine 183 carries N-linked (GlcNAc...) asparagine glycosylation. The Proton donor role is filled by histidine 205. Residue tyrosine 261 is part of the active site. N-linked (GlcNAc...) asparagine glycosylation is found at asparagine 336 and asparagine 411. Positions 452 and 470 each coordinate Mn(2+). The active site involves tyrosine 473. Asparagine 481 is a Mn(2+) binding site. N-linked (GlcNAc...) asparagine glycans are attached at residues asparagine 642 and asparagine 648. A helical membrane pass occupies residues 903–923; that stretch reads LFLILNIAIFFVMLAMQLTYF. Topologically, residues 924-933 are cytoplasmic; sequence QRAQSLHGQR. A helical transmembrane segment spans residues 934–954; it reads CLYAVLLIDSCILLWLYSSCS. The Lumenal segment spans residues 955–958; that stretch reads QSQC.

This sequence belongs to the dermatan-sulfate isomerase family. Requires Mn(2+) as cofactor. N-glycosylated. Glycosylation is important for enzymatic activity.

The protein localises to the endoplasmic reticulum membrane. The protein resides in the golgi apparatus membrane. It is found in the cytoplasmic vesicle membrane. Its subcellular location is the microsome membrane. It carries out the reaction chondroitin 4'-sulfate = dermatan 4'-sulfate. The protein operates within glycan metabolism; chondroitin sulfate biosynthesis. It participates in glycan metabolism; heparan sulfate biosynthesis. Functionally, converts D-glucuronic acid to L-iduronic acid (IdoUA) residues. Plays an important role in the biosynthesis of the glycosaminoglycan/mucopolysaccharide dermatan sulfate. The chain is Dermatan-sulfate epimerase (DSE) from Bos taurus (Bovine).